The following is a 247-amino-acid chain: MSGHSKWASIKHKKAANDSKKGKIWSKIAKEITIAVKEGGSPDPDQNARLRMVIVKAKGTNMPNDNIDRAIKRGAGAGEGANIEEMSYEGYAPGGVAIIVDVATDNKNRTAAEIRSIFSKNGGNLAENGAVSWQFKKKAVVMIPAAGNTEESLMDIVLDAGAEDIEQDEEVFTITGPMETLSSIVDALKAKGIEPESAEIVRVADNTMTIAENDAKKVMKIIGLFEDHDDVSAVATNLEITDNLIEE.

The segment at 1 to 22 is disordered; sequence MSGHSKWASIKHKKAANDSKKG.

Belongs to the TACO1 family.

It is found in the cytoplasm. The sequence is that of Probable transcriptional regulatory protein BHWA1_01533 from Brachyspira hyodysenteriae (strain ATCC 49526 / WA1).